We begin with the raw amino-acid sequence, 296 residues long: CDP-diacylglycerol--glycerol-3-phosphate 3-phosphatidyltransferase 1, chloroplastic/mitochondrial (296 aa).

A chloroplast and mitochondrion-targeting transit peptide spans 1 to 39 (MLRSGLASLIVDVNLRRTLRPSPTFSFPAHLSRCIITSR). Residues 62-82 (FSSSSSSEQSRPTSSSRNSFS) show a composition bias toward low complexity. The interval 62–103 (FSSSSSSEQSRPTSSSRNSFSGHGQLDSDDNSSPPPSQSSSK) is disordered. Helical transmembrane passes span 104-124 (VLTLPTVLTLGRVAAVPLLVA), 126-146 (FYVDSWWGTTATTSIFIAAAI), 164-184 (FGAFLDPVADKLMVAATLILL), 189-209 (IQVAELGPLPWLLTVPSIAII), and 261-281 (VGWLVASGAGLLYVSAGLSVW).

It belongs to the CDP-alcohol phosphatidyltransferase class-I family. It depends on Mn(2+) as a cofactor.

Its subcellular location is the plastid. It is found in the chloroplast membrane. The protein resides in the mitochondrion membrane. The catalysed reaction is a CDP-1,2-diacyl-sn-glycerol + sn-glycerol 3-phosphate = a 1,2-diacyl-sn-glycero-3-phospho-(1'-sn-glycero-3'-phosphate) + CMP + H(+). It participates in phospholipid metabolism; phosphatidylglycerol biosynthesis; phosphatidylglycerol from CDP-diacylglycerol: step 1/2. In terms of biological role, catalyzes the committed step to the synthesis of the acidic phospholipids, including phosphatidylglycerol (PG). Transfers specifically a phosphatidyl group from CDP-diacylglycerol to glycerol-3-phosphate to form phosphatidylglycerophosphate. Cannot catalyze the phosphatidyl group transfer to inositol, serine, choline or phosphatidylglycerol. Possesses high activity with CDP-dipalmitoylglycerol and low activity with CDP-dioleoylglycerol. Essential for chloroplast differentiation and PG accumulation in thylakoids, an essential process for the assembly of antenna-reaction center complexes to optimize energy transfer from antenna pigments, and for subsequent photochemical efficiency of photosystem II (PSII). During cold acclimation (at 5 degrees Celsius), necessary for the photosystem I (PSI) photochemistry, including both reaction center and light-harvesting integrity. But dispensable in mitochondrion, being redundant with PGPS2 for the production of PG and its derivative cardiolipin (CL) in mitochondrial membranes. Together with PGPS2, required for the proper embryo development by providing PG accurate levels. The polypeptide is CDP-diacylglycerol--glycerol-3-phosphate 3-phosphatidyltransferase 1, chloroplastic/mitochondrial (Arabidopsis thaliana (Mouse-ear cress)).